Here is a 263-residue protein sequence, read N- to C-terminus: Endonuclease 8 (263 aa).

Pro-2 serves as the catalytic Schiff-base intermediate with DNA. Glu-3 functions as the Proton donor in the catalytic mechanism. Lys-53 acts as the Proton donor; for beta-elimination activity in catalysis. Residues Gln-70, Arg-125, and Asn-169 each coordinate DNA. An FPG-type zinc finger spans residues 229–263 (KVFHRDGEPCERCGGIIEKTTLSSRPFYWCPGCQH). Residue Arg-253 is the Proton donor; for delta-elimination activity of the active site.

The protein belongs to the FPG family. The cofactor is Zn(2+).

The catalysed reaction is 2'-deoxyribonucleotide-(2'-deoxyribose 5'-phosphate)-2'-deoxyribonucleotide-DNA = a 3'-end 2'-deoxyribonucleotide-(2,3-dehydro-2,3-deoxyribose 5'-phosphate)-DNA + a 5'-end 5'-phospho-2'-deoxyribonucleoside-DNA + H(+). Functionally, involved in base excision repair of DNA damaged by oxidation or by mutagenic agents. Acts as a DNA glycosylase that recognizes and removes damaged bases. Has a preference for oxidized pyrimidines, such as thymine glycol, 5,6-dihydrouracil and 5,6-dihydrothymine. Has AP (apurinic/apyrimidinic) lyase activity and introduces nicks in the DNA strand. Cleaves the DNA backbone by beta-delta elimination to generate a single-strand break at the site of the removed base with both 3'- and 5'-phosphates. The sequence is that of Endonuclease 8 from Escherichia coli O127:H6 (strain E2348/69 / EPEC).